The chain runs to 599 residues: Serine/threonine-protein kinase haspin homolog (599 aa).

A Protein kinase domain is found at P287–S599. ATP-binding positions include I293–A301, K310, E407–D412, D448–N453, and D486–T488. Catalysis depends on D448, which acts as the Proton acceptor.

It belongs to the protein kinase superfamily. Ser/Thr protein kinase family. Haspin subfamily. Expressed in meristems and primordia of root tips, lateral roots, shoot apex, leaves and flowers.

It is found in the cytoplasm. The protein resides in the perinuclear region. The protein localises to the nucleus. It localises to the chromosome. Its subcellular location is the cytoskeleton. It is found in the phragmoplast. It catalyses the reaction L-seryl-[protein] + ATP = O-phospho-L-seryl-[protein] + ADP + H(+). It carries out the reaction L-threonyl-[protein] + ATP = O-phospho-L-threonyl-[protein] + ADP + H(+). Its function is as follows. Threonine-protein kinase that phosphorylates histone H3 in vitro at 'Thr-3' (H3T3ph) and 'Thr-11' (H3T11ph), but not at 'Ser-10' (H3S10ph) or 'Ser-28' (H3S28ph). Plays a role in mitotic cell division during plant growth. Threonine-protein kinase that phosphorylates histone H3 in vitro at 'Thr-3' (H3T3ph), but not at 'Thr-11' (H3T11ph), 'Ser-10' (H3S10ph) or 'Ser-28' (H3S28ph). Involved in histone H3 phosphorylation in mitotic cells. Contributes to organ and plant development, as well as embryonic patterning. This is Serine/threonine-protein kinase haspin homolog from Arabidopsis thaliana (Mouse-ear cress).